The primary structure comprises 284 residues: Putative ABC transporter ATP-binding protein sll0385 (284 aa).

In terms of domain architecture, ABC transporter spans 51–278 (IRVRELSFAY…QTLMESHGLE (228 aa)). 84 to 91 (GHNGCGKT) is a binding site for ATP.

It belongs to the ABC transporter superfamily.

The protein localises to the cell inner membrane. Its function is as follows. Probably part of an ABC transporter complex. Responsible for energy coupling to the transport system. The sequence is that of Putative ABC transporter ATP-binding protein sll0385 from Synechocystis sp. (strain ATCC 27184 / PCC 6803 / Kazusa).